The following is a 491-amino-acid chain: Serine/threonine-protein kinase 3 (491 aa).

M1 is subject to N-acetylmethionine. S15 is subject to Phosphoserine. The Protein kinase domain maps to 27-278 (FDVLEKLGEG…ATQLLQHPFI (252 aa)). ATP is bound by residues 33-41 (LGEGSYGSV) and K56. Residue T117 is modified to Phosphothreonine; by PKB/AKT1. D146 serves as the catalytic Proton acceptor. Positions 151 and 164 each coordinate Mg(2+). T180 carries the phosphothreonine; by autocatalysis modification. Residues 291–324 (ITEGMEIKAKRHEEQQRELEDEEENSDEDELDSH) adopt a coiled-coil conformation. Disordered stretches follow at residues 301-343 (RHEE…TSTM) and 370-392 (EDEEEEDGTMKRNATSPQVQRPS). The segment covering 309–321 (LEDEEENSDEDEL) has biased composition (acidic residues). The residue at position 316 (S316) is a Phosphoserine. Over residues 326-343 (MVKTSSEGVGTMRATSTM) the composition is skewed to polar residues. Phosphothreonine is present on residues T336 and T378. Polar residues predominate over residues 381-390 (RNATSPQVQR). Residue T384 is modified to Phosphothreonine; by PKB/AKT1. S385 and S444 each carry phosphoserine. The region spanning 437-484 (FDFLKNLSLEELQMRLKALDPMMEREIEELHQRYSAKRQPILDAMDAK) is the SARAH domain.

It belongs to the protein kinase superfamily. STE Ser/Thr protein kinase family. STE20 subfamily. As to quaternary structure, homodimer; mediated via the coiled-coil region. Interacts with NORE1, which inhibits autoactivation. Interacts with and stabilizes SAV1. Interacts with RAF1, which prevents dimerization and phosphorylation. Interacts with RASSF1. Interacts (via SARAH domain) with isoform 1 of NEK2. Interacts with ESR1 only in the presence of SAV1. Interacts with PKB/AKT1. Forms a tripartite complex with MOBKL1B and STK38. Interacts with RASSF2 (via SARAH domain). Interacts with DLG5 (via PDZ domain 3). Interacts with LATS1; this interaction is inhibited in the presence of DLG5. Interacts with MARK3 in the presence of DLG5. Interacts with RASSF5; this interaction inhibits STK3 autoactivation through heterodimerization. Interacts (when phosphorylated) with SLMAP (via FHA domain); the interaction associates STK3 with the STRIPAK complex. The cofactor is Mg(2+). Autophosphorylated on two residues Thr-174 and Thr-180, leading to activation. Phosphorylation at Thr-117 and Thr-384 by PKB/AKT1, leads to inhibition of its: cleavage, kinase activity, autophosphorylation at Thr-180, binding to RASSF1 and nuclear translocation, and increase in its binding to RAF1. Phosphorylated at Ser-15 by PLK1, leading to activation. Post-translationally, proteolytically cleaved by caspase-3 during apoptosis. Proteolytic cleavage results in kinase activation and nuclear translocation of the truncated form (MST1/N). In terms of processing, ubiquitinated by TRIM69; leading to its redistribution to the perinuclear cytoskeleton.

The protein resides in the cytoplasm. Its subcellular location is the nucleus. It carries out the reaction L-seryl-[protein] + ATP = O-phospho-L-seryl-[protein] + ADP + H(+). The catalysed reaction is L-threonyl-[protein] + ATP = O-phospho-L-threonyl-[protein] + ADP + H(+). With respect to regulation, inhibited by the C-terminal non-catalytic region. Activated by caspase-cleavage. Full activation also requires homodimerization and autophosphorylation of Thr-180, which are inhibited by the proto-oncogene product RAF1. Activated by RASSF1 which acts by preventing its dephosphorylation. When autophosphorylated at Thr-180, recruits STRIPAK complex and promotes PP2A-mediated dephosphorylation and inactivation of STK3. In terms of biological role, stress-activated, pro-apoptotic kinase which, following caspase-cleavage, enters the nucleus and induces chromatin condensation followed by internucleosomal DNA fragmentation. Key component of the Hippo signaling pathway which plays a pivotal role in organ size control and tumor suppression by restricting proliferation and promoting apoptosis. The core of this pathway is composed of a kinase cascade wherein STK3/MST2 and STK4/MST1, in complex with its regulatory protein SAV1, phosphorylates and activates LATS1/2 in complex with its regulatory protein MOB1, which in turn phosphorylates and inactivates YAP1 oncoprotein and WWTR1/TAZ. Phosphorylation of YAP1 by LATS2 inhibits its translocation into the nucleus to regulate cellular genes important for cell proliferation, cell death, and cell migration. STK3/MST2 and STK4/MST1 are required to repress proliferation of mature hepatocytes, to prevent activation of facultative adult liver stem cells (oval cells), and to inhibit tumor formation. Phosphorylates NKX2-1. Phosphorylates NEK2 and plays a role in centrosome disjunction by regulating the localization of NEK2 to centrosomes, and its ability to phosphorylate CROCC and CEP250. In conjunction with SAV1, activates the transcriptional activity of ESR1 through the modulation of its phosphorylation. Positively regulates RAF1 activation via suppression of the inhibitory phosphorylation of RAF1 on 'Ser-259'. Phosphorylates MOBKL1A and RASSF2. Phosphorylates MOBKL1B on 'Thr-74'. Acts cooperatively with MOBKL1B to activate STK38. This chain is Serine/threonine-protein kinase 3 (Stk3), found in Rattus norvegicus (Rat).